A 67-amino-acid chain; its full sequence is ORF2p protein (67 aa).

The interval 13 to 18 is important for viral replication in intestinal cells; the sequence is WIGHPV. Positions 22–38 form a transmembrane segment; that stretch reads AIIYPFVGFIPLSLKEV.

The protein localises to the host cytoplasmic vesicle membrane. Facilitates virus release from intestinal cells in vitro, possibly through the host autophagic pathway. The polypeptide is ORF2p protein (Homo sapiens (Human)).